The chain runs to 234 residues: Pepsin inhibitor Dit33 (234 aa).

The first 17 residues, 1-17, serve as a signal peptide directing secretion; that stretch reads MKILFCFVLLAIAALRA. Cys-135 and Cys-230 are oxidised to a cystine. The tract at residues 200–222 is disordered; that stretch reads RHETSSQPSDATTISTTTQAPVE. A compositionally biased stretch (polar residues) spans 204–219; sequence SSQPSDATTISTTTQA.

Belongs to the protease inhibitor I33 family.

The protein resides in the secreted. In terms of biological role, aspartyl protease inhibitor. This is Pepsin inhibitor Dit33 (DIT33) from Dirofilaria immitis (Canine heartworm).